Reading from the N-terminus, the 196-residue chain is Glycerol-3-phosphate acyltransferase (196 aa).

The next 5 helical transmembrane spans lie at 4 to 24 (FYIM…VVLT), 53 to 73 (LGVL…LIAI), 78 to 98 (LGDA…CYPV), 114 to 134 (IFLV…ALLV), and 140 to 160 (VSLG…FTEG).

It belongs to the PlsY family. Probably interacts with PlsX.

It is found in the cell inner membrane. It catalyses the reaction an acyl phosphate + sn-glycerol 3-phosphate = a 1-acyl-sn-glycero-3-phosphate + phosphate. The protein operates within lipid metabolism; phospholipid metabolism. Its function is as follows. Catalyzes the transfer of an acyl group from acyl-phosphate (acyl-PO(4)) to glycerol-3-phosphate (G3P) to form lysophosphatidic acid (LPA). This enzyme utilizes acyl-phosphate as fatty acyl donor, but not acyl-CoA or acyl-ACP. This chain is Glycerol-3-phosphate acyltransferase, found in Syntrophotalea carbinolica (strain DSM 2380 / NBRC 103641 / GraBd1) (Pelobacter carbinolicus).